A 354-amino-acid chain; its full sequence is Guanine nucleotide-binding protein G(i) subunit alpha-3 (354 aa).

A lipid anchor (N-myristoyl glycine) is attached at Gly2. Cys3 carries the S-palmitoyl cysteine lipid modification. A G-alpha domain is found at 32–354; it reads KEVKLLLLGA…KNNLKECGLY (323 aa). The G1 motif stretch occupies residues 35-48; sequence KLLLLGAGESGKST. The GTP site is built by Gly42, Glu43, Ser44, Gly45, Lys46, Ser47, Thr48, Asp150, Ser151, Leu175, Arg176, Thr177, Arg178, Val179, Lys180, Thr181, Val201, Gly203, Asn269, Lys270, Asp272, Leu273, Cys325, Ala326, and Thr327. Ser47 is a binding site for Mg(2+). The interval 173–181 is G2 motif; sequence DVLRTRVKT. Position 181 (Thr181) interacts with Mg(2+). A G3 motif region spans residues 196-205; it reads FKMFDVGGQR. Residues 265-272 are G4 motif; it reads ILFLNKKD. A G5 motif region spans residues 324–329; it reads TCATDT.

It belongs to the G-alpha family. G(i/o/t/z) subfamily. Heterotrimeric G proteins are composed of 3 units; alpha, beta and gamma. The alpha subunit contains the guanine nucleotide binding site. GTP binding causes dissociation of the heterotrimer, liberating the individual subunits so that they can interact with downstream effector proteins. Forms a complex with CCDC88A/GIV and EGFR which leads to enhanced EGFR signaling and triggering of cell migration; ligand stimulation is required for recruitment of GNAI3 to the complex. Interacts (inactive GDP-bound form) with CCDC88A/GIV (via GBA motif); the interaction leads to activation of GNAI3. Interacts (inactive GDP-bound form) with CCDC88C/DAPLE (via GBA motif); the interaction leads to activation of GNAI3. Interacts (inactive GDP-bound form) with NUCB1 (via GBA motif) and NUCB2 (via GBA motif); the interaction leads to activation of GNAI3. Interacts (inactive GDP-bound form) with PLCD4 (via GBA motif); the interaction leads to activation of GNAI3. Interacts with INSR; the interaction is probably mediated by CCDC88A/GIV. Interacts with GPSM1. Interacts (GDP-bound form) with GPSM2 (via GoLoco domains). Does not interact with RGS2. Interacts with RGS8 and RGS10; this strongly enhances the intrinsic GTPase activity. Interacts with RGS16; this strongly enhances the intrinsic GTPase activity. Interacts with RGS12. Interacts (via active GTP- or inactive GDP-bound form) with RGS14. Interacts (via active GTP-bound form) with TRPC5 (via ANK repeats) in a homotetrameric ion channel; the interaction is direct and activates the channel activity.

It is found in the cytoplasm. The protein resides in the cell membrane. The protein localises to the cytoskeleton. Its subcellular location is the microtubule organizing center. It localises to the centrosome. Heterotrimeric guanine nucleotide-binding proteins (G proteins) function as transducers downstream of G protein-coupled receptors (GPCRs) in numerous signaling cascades. The alpha chain contains the guanine nucleotide binding site and alternates between an active, GTP-bound state and an inactive, GDP-bound state. Signaling by an activated GPCR promotes GDP release and GTP binding. The alpha subunit has a low GTPase activity that converts bound GTP to GDP, thereby terminating the signal. Both GDP release and GTP hydrolysis are modulated by numerous regulatory proteins. Signaling is mediated via effector proteins, such as adenylate cyclase. Inhibits adenylate cyclase activity, leading to decreased intracellular cAMP levels. Stimulates the activity of receptor-regulated K(+) channels. The active GTP-bound form prevents the association of RGS14 with centrosomes and is required for the translocation of RGS14 from the cytoplasm to the plasma membrane. May play a role in cell division. The active GTP-bound form activates the calcium permeant TRPC5 ion channels. This chain is Guanine nucleotide-binding protein G(i) subunit alpha-3 (GNAI3), found in Cricetulus griseus (Chinese hamster).